Consider the following 508-residue polypeptide: Non-structural protein 1 (508 aa).

Residues 424–453 (NTESTTTNNAQSPVSDPVNASANVKTSPAG) are compositionally biased toward polar residues. The disordered stretch occupies residues 424–464 (NTESTTTNNAQSPVSDPVNASANVKTSPAGTHTDESVMKKE). The span at 455-464 (HTDESVMKKE) shows a compositional bias: basic and acidic residues.

This Banna virus (BAV) protein is Non-structural protein 1 (Segment-5).